A 223-amino-acid chain; its full sequence is Phosphoribosylformylglycinamidine synthase subunit PurQ (223 aa).

Positions 3–223 (FAVLVFPGSN…MVKSWREQNV (221 aa)) constitute a Glutamine amidotransferase type-1 domain. Cys-85 acts as the Nucleophile in catalysis. Catalysis depends on residues His-193 and Glu-195.

Part of the FGAM synthase complex composed of 1 PurL, 1 PurQ and 2 PurS subunits.

Its subcellular location is the cytoplasm. The enzyme catalyses N(2)-formyl-N(1)-(5-phospho-beta-D-ribosyl)glycinamide + L-glutamine + ATP + H2O = 2-formamido-N(1)-(5-O-phospho-beta-D-ribosyl)acetamidine + L-glutamate + ADP + phosphate + H(+). It catalyses the reaction L-glutamine + H2O = L-glutamate + NH4(+). Its pathway is purine metabolism; IMP biosynthesis via de novo pathway; 5-amino-1-(5-phospho-D-ribosyl)imidazole from N(2)-formyl-N(1)-(5-phospho-D-ribosyl)glycinamide: step 1/2. Functionally, part of the phosphoribosylformylglycinamidine synthase complex involved in the purines biosynthetic pathway. Catalyzes the ATP-dependent conversion of formylglycinamide ribonucleotide (FGAR) and glutamine to yield formylglycinamidine ribonucleotide (FGAM) and glutamate. The FGAM synthase complex is composed of three subunits. PurQ produces an ammonia molecule by converting glutamine to glutamate. PurL transfers the ammonia molecule to FGAR to form FGAM in an ATP-dependent manner. PurS interacts with PurQ and PurL and is thought to assist in the transfer of the ammonia molecule from PurQ to PurL. This is Phosphoribosylformylglycinamidine synthase subunit PurQ from Staphylococcus epidermidis (strain ATCC 35984 / DSM 28319 / BCRC 17069 / CCUG 31568 / BM 3577 / RP62A).